The sequence spans 315 residues: Ribose-phosphate pyrophosphokinase (315 aa).

ATP-binding positions include 40–42 (DGE) and 99–100 (RQ). 2 residues coordinate Mg(2+): H133 and D175. The active site involves K198. Residues R200, D224, and 228-232 (DTAHS) each bind D-ribose 5-phosphate.

It belongs to the ribose-phosphate pyrophosphokinase family. Class I subfamily. Homohexamer. Requires Mg(2+) as cofactor.

The protein resides in the cytoplasm. The enzyme catalyses D-ribose 5-phosphate + ATP = 5-phospho-alpha-D-ribose 1-diphosphate + AMP + H(+). It functions in the pathway metabolic intermediate biosynthesis; 5-phospho-alpha-D-ribose 1-diphosphate biosynthesis; 5-phospho-alpha-D-ribose 1-diphosphate from D-ribose 5-phosphate (route I): step 1/1. In terms of biological role, involved in the biosynthesis of the central metabolite phospho-alpha-D-ribosyl-1-pyrophosphate (PRPP) via the transfer of pyrophosphoryl group from ATP to 1-hydroxyl of ribose-5-phosphate (Rib-5-P). The sequence is that of Ribose-phosphate pyrophosphokinase from Thermotoga maritima (strain ATCC 43589 / DSM 3109 / JCM 10099 / NBRC 100826 / MSB8).